We begin with the raw amino-acid sequence, 433 residues long: MSKIVKVIGREIIDSRGNPTVEAEVHLEGGFVGMAAAPSGASTGSREALELRDGDKSRFLGKGVLKALEAVNGPIAQALLGKDAKDQATVDQIMIDLDGTENKSKFGANAILAVSLANAKAAAAAKGMPLYAHIAELNGTPGVYSMPLPMMNIINGGEHADNNVDIQEFMIQPVGAKTLKEAVRMGAEVFHNLAKVLKSKGYNTAVGDEGGFAPNLKSNAEALEVIAEAVAAAGYKLGTDVTLAMDCAASEFYDAEKKEYNLKGEGRVFTSNGFSDFLEELTAKFPIVSIEDGLDESDWEGFAYQTQKLGKKIQIVGDDLFVTNTKILKRGIDNGIANSILIKFNQIGSLTETLAAIKMAKDAGYTAVISHRSGETEDATIADLAVGTAAGQIKTGSMSRSDRVAKYNQLIRIEEALGAKAPFRGLKEVKNQA.

Glutamine 167 contacts (2R)-2-phosphoglycerate. Glutamate 209 acts as the Proton donor in catalysis. Aspartate 246 lines the Mg(2+) pocket. The Plasminogen-binding motif motif lies at 252–260 (FYDAEKKEY). 2 residues coordinate Mg(2+): glutamate 291 and aspartate 318. (2R)-2-phosphoglycerate-binding residues include lysine 343, arginine 372, serine 373, and lysine 394. Lysine 343 serves as the catalytic Proton acceptor.

Belongs to the enolase family. Component of the RNA degradosome, a multiprotein complex involved in RNA processing and mRNA degradation. The cofactor is Mg(2+).

Its subcellular location is the cell inner membrane. It is found in the cell outer membrane. The protein resides in the cytoplasm. The protein localises to the secreted. It localises to the cell surface. The enzyme catalyses (2R)-2-phosphoglycerate = phosphoenolpyruvate + H2O. It participates in carbohydrate degradation; glycolysis; pyruvate from D-glyceraldehyde 3-phosphate: step 4/5. Functionally, catalyzes the reversible conversion of 2-phosphoglycerate (2-PG) into phosphoenolpyruvate (PEP). It is essential for the degradation of carbohydrates via glycolysis. Its function is as follows. 'Moonlights' as a plasminogen receptor and plasmin activator. Binds host (human) plasminogen in vitro. Binds human plasmin and plasminogen on the cell surface; enhances the activity of host tissue-specific plasminogen activator (tPA). Plasmin bound to bacteria is partially protected from its physiological inhibitor alpha-2AP (SERPINF2). The protein is Enolase of Aeromonas hydrophila.